A 456-amino-acid polypeptide reads, in one-letter code: Potassium voltage-gated channel subfamily A member 7 (456 aa).

The helical transmembrane segment at 144-164 (VLAVVSVLVILVSIVVFCLET) threads the bilayer. An N-linked (GlcNAc...) asparagine glycan is attached at Asn-191. Residues 209–229 (FFVVETLCICWFSFELLVRLL) form a helical membrane-spanning segment. Residue Cys-231 is the site of S-palmitoyl cysteine attachment. A helical transmembrane segment spans residues 241–261 (VMNLIDFVAILPYFVALGTEL). A helical; Voltage-sensor membrane pass occupies residues 276-295 (ILRVIRLVRVFRIFKLSRHS). A helical transmembrane segment spans residues 312–332 (LGLLIFFLFIGVVLFSSAVYF). A Selectivity filter motif is present at residues 358-363 (TVGYGD). A helical membrane pass occupies residues 373–393 (IVGSLCAIAGVLTISLPVPVI).

This sequence belongs to the potassium channel family. A (Shaker) (TC 1.A.1.2) subfamily. Kv1.7/KCNA7 sub-subfamily. Heterotetramer of potassium channel proteins. Highly expressed in skeletal muscle, heart and kidney.

The protein resides in the membrane. The catalysed reaction is K(+)(in) = K(+)(out). Its function is as follows. Mediates the voltage-dependent potassium ion permeability of excitable membranes. Assuming opened or closed conformations in response to the voltage difference across the membrane, the protein forms a potassium-selective channel through which potassium ions may pass in accordance with their electrochemical gradient. In Homo sapiens (Human), this protein is Potassium voltage-gated channel subfamily A member 7 (KCNA7).